The following is a 187-amino-acid chain: ATP synthase subunit delta (187 aa).

It belongs to the ATPase delta chain family. In terms of assembly, F-type ATPases have 2 components, F(1) - the catalytic core - and F(0) - the membrane proton channel. F(1) has five subunits: alpha(3), beta(3), gamma(1), delta(1), epsilon(1). F(0) has three main subunits: a(1), b(2) and c(10-14). The alpha and beta chains form an alternating ring which encloses part of the gamma chain. F(1) is attached to F(0) by a central stalk formed by the gamma and epsilon chains, while a peripheral stalk is formed by the delta and b chains.

Its subcellular location is the cell membrane. In terms of biological role, f(1)F(0) ATP synthase produces ATP from ADP in the presence of a proton or sodium gradient. F-type ATPases consist of two structural domains, F(1) containing the extramembraneous catalytic core and F(0) containing the membrane proton channel, linked together by a central stalk and a peripheral stalk. During catalysis, ATP synthesis in the catalytic domain of F(1) is coupled via a rotary mechanism of the central stalk subunits to proton translocation. Functionally, this protein is part of the stalk that links CF(0) to CF(1). It either transmits conformational changes from CF(0) to CF(1) or is implicated in proton conduction. The protein is ATP synthase subunit delta of Mesomycoplasma hyopneumoniae (strain 232) (Mycoplasma hyopneumoniae).